Consider the following 211-residue polypeptide: Protein GrpE (211 aa).

The tract at residues 1–43 (MTDETTKNGPDATAADAAADAAANVEIDNSVQEEAKQPDPLEL) is disordered. Residues 11 to 23 (DATAADAAADAAA) show a composition bias toward low complexity. Over residues 33–43 (EEAKQPDPLEL) the composition is skewed to basic and acidic residues.

This sequence belongs to the GrpE family. Homodimer.

The protein resides in the cytoplasm. Its function is as follows. Participates actively in the response to hyperosmotic and heat shock by preventing the aggregation of stress-denatured proteins, in association with DnaK and GrpE. It is the nucleotide exchange factor for DnaK and may function as a thermosensor. Unfolded proteins bind initially to DnaJ; upon interaction with the DnaJ-bound protein, DnaK hydrolyzes its bound ATP, resulting in the formation of a stable complex. GrpE releases ADP from DnaK; ATP binding to DnaK triggers the release of the substrate protein, thus completing the reaction cycle. Several rounds of ATP-dependent interactions between DnaJ, DnaK and GrpE are required for fully efficient folding. The protein is Protein GrpE of Rhizobium etli (strain ATCC 51251 / DSM 11541 / JCM 21823 / NBRC 15573 / CFN 42).